The chain runs to 502 residues: Nucleoside transporter 2 (502 aa).

The Cytoplasmic portion of the chain corresponds to 1–30; it reads MTTSSDSAMVNHTPSPWYKFGFKSFAEFNT. Residues 31 to 51 traverse the membrane as a helical segment; the sequence is YVTFVFLGMSIMMVASAVTSA. Residues 52 to 81 lie on the Extracellular side of the membrane; sequence PDFLTRYYVYATGDPDAVAETPLFWNNANT. Residues 82–102 traverse the membrane as a helical segment; the sequence is FYNAGTYVLQVLTELFSLTPF. The Cytoplasmic portion of the chain corresponds to 103–111; that stretch reads MRRIPLSVR. The helical transmembrane segment at 112–132 threads the bilayer; sequence LFVGLGIPFAELLLIIIVPAA. Residues 133 to 137 are Extracellular-facing; that stretch reads TIKSQ. The chain crosses the membrane as a helical span at residues 138-158; the sequence is HGAIAVIMVVACVGGFSKALC. Topologically, residues 159-178 are cytoplasmic; sequence DSCTNALVGPFPTKFMNGAQ. A helical membrane pass occupies residues 179–199; the sequence is WGLTVIALLMSIIQIILKVSM. Residues 200–210 are Extracellular-facing; the sequence is GTSFHDILTMS. Residues 211 to 231 form a helical membrane-spanning segment; that stretch reads RIYFGICIGIQLFAIFELAIL. Residues 232–352 are Cytoplasmic-facing; that stretch reads RFNPFAQKYI…SVFKRVYPML (121 aa). The segment at 252-273 is disordered; it reads AQNNESTLEETAPSMNEPAAGD. Residues 353–373 form a helical membrane-spanning segment; it reads VCVFLIYFTSLLTFPGVFFLV. At 374 to 380 the chain is on the extracellular side; that stretch reads STTSGWY. A helical transmembrane segment spans residues 381–401; that stretch reads MTVIVTLFNAGDFISRMVLMF. The Cytoplasmic portion of the chain corresponds to 402–408; it reads RPLRPSP. The chain crosses the membrane as a helical span at residues 409 to 429; it reads KVVVAGTLGRLIIIPFLVLCV. The Extracellular portion of the chain corresponds to 430–436; sequence RGIIRGE. The helical transmembrane segment at 437-457 threads the bilayer; the sequence is ALPYVLITLLGLTNGYFGCMA. Residues 458 to 477 are Cytoplasmic-facing; it reads CIHCPRTTTLRYAGERSLAA. Residues 478 to 498 traverse the membrane as a helical segment; it reads MLSGISIMLGLCFGSNLSLAI. The Extracellular segment spans residues 499 to 502; sequence TLTH.

This sequence belongs to the SLC29A/ENT transporter (TC 2.A.57) family.

The protein localises to the cell membrane. The enzyme catalyses inosine(in) = inosine(out). It catalyses the reaction guanosine(in) = guanosine(out). Its function is as follows. High affinity transporter for inosine and guanosine. This is Nucleoside transporter 2 from Crithidia fasciculata.